A 413-amino-acid polypeptide reads, in one-letter code: Cell division protein FtsZ 2 (413 aa).

Residues Gly130–Gly132, Glu169, Arg173, and Asp216 each bind GTP.

The protein belongs to the FtsZ family. Homodimer. Polymerizes to form a dynamic ring structure in a strictly GTP-dependent manner. Interacts directly with several other division proteins.

Its subcellular location is the cytoplasm. Functionally, essential cell division protein that forms a contractile ring structure (Z ring) at the future cell division site. The regulation of the ring assembly controls the timing and the location of cell division. One of the functions of the FtsZ ring is to recruit other cell division proteins to the septum to produce a new cell wall between the dividing cells. Binds GTP and shows GTPase activity. This Pyrococcus abyssi (strain GE5 / Orsay) protein is Cell division protein FtsZ 2.